A 352-amino-acid polypeptide reads, in one-letter code: Heat-inducible transcription repressor HrcA (352 aa).

The protein belongs to the HrcA family.

Negative regulator of class I heat shock genes (grpE-dnaK-dnaJ and groELS operons). Prevents heat-shock induction of these operons. This chain is Heat-inducible transcription repressor HrcA, found in Latilactobacillus sakei subsp. sakei (strain 23K) (Lactobacillus sakei subsp. sakei).